Here is a 454-residue protein sequence, read N- to C-terminus: Zeatin O-xylosyltransferase (454 aa).

It belongs to the UDP-glycosyltransferase family. High level in young seeds, less in older seeds and very low in roots.

The catalysed reaction is zeatin + UDP-alpha-D-xylose = O-beta-D-xylosylzeatin + UDP + H(+). Its function is as follows. Utilizes UDP-xylose as the sugar donor and catalyzes the formation of o-xylosylzeatin from zeatin. Does not act on UDP-glucose. This Phaseolus vulgaris (Kidney bean) protein is Zeatin O-xylosyltransferase.